Consider the following 184-residue polypeptide: Photosystem I assembly protein Ycf4 (184 aa).

Transmembrane regions (helical) follow at residues 22 to 42 and 57 to 77; these read FCWA…GTSS and IVFF…LFIS.

It belongs to the Ycf4 family.

Its subcellular location is the plastid. The protein localises to the chloroplast thylakoid membrane. In terms of biological role, seems to be required for the assembly of the photosystem I complex. The protein is Photosystem I assembly protein Ycf4 of Lactuca sativa (Garden lettuce).